A 69-amino-acid polypeptide reads, in one-letter code: Probable molybdenum-pterin-binding protein (69 aa).

The Mop domain maps to 2-68 (KISARNQLKG…IKATSVMVGV (67 aa)).

To C.pasteurianum MOP proteins.

In terms of biological role, binds one mole of molybdenum per mole of protein and contains a pterin. In Haemophilus influenzae (strain ATCC 51907 / DSM 11121 / KW20 / Rd), this protein is Probable molybdenum-pterin-binding protein.